The following is a 562-amino-acid chain: Endochitinase (562 aa).

An N-terminal signal peptide occupies residues 1–20 (MSLLYIILLFTQFLLLPTDA). The 285-residue stretch at 27-311 (TNIAVYWGQN…EILKNLLTSA (285 aa)) folds into the GH18 domain. Glutamate 157 acts as the Proton donor in catalysis. 2 disordered regions span residues 329-358 (TSSASTSSASTSQKKTTQSTTSTQSKSKVT) and 461-484 (TLSPTTTSTSSGSTSSGSTSSDST). A chitin-binding, high affinity region spans residues 481 to 562 (SDSTARTLAK…NFSYLESNYF (82 aa)). A glycan (N-linked (GlcNAc...) asparagine) is linked at asparagine 553.

This sequence belongs to the glycosyl hydrolase 18 family. Chitinase class V subfamily. Extensively glycosylated with a series of short O-linked mannose oligosaccharides ranging in size from Man(2) to Man(5).

Its subcellular location is the secreted. It localises to the cell wall. The catalysed reaction is Random endo-hydrolysis of N-acetyl-beta-D-glucosaminide (1-&gt;4)-beta-linkages in chitin and chitodextrins.. Functionally, chitinase is required for cell separation during growth of S.cerevisiae. This is Endochitinase (CTS1) from Saccharomyces cerevisiae (strain ATCC 204508 / S288c) (Baker's yeast).